A 185-amino-acid chain; its full sequence is Ribosome-recycling factor (185 aa).

It belongs to the RRF family.

It localises to the cytoplasm. Its function is as follows. Responsible for the release of ribosomes from messenger RNA at the termination of protein biosynthesis. May increase the efficiency of translation by recycling ribosomes from one round of translation to another. The protein is Ribosome-recycling factor of Geobacillus sp. (strain WCH70).